A 680-amino-acid chain; its full sequence is Fermitin family homolog 2 (680 aa).

The segment at 40–81 (HIGGVMLKLVEKLDVKKDWSDHALWWEKKRTWLLKTHWTLDK) is interaction with membranes containing phosphatidylinositol phosphate. Residues 141–162 (LKKPRDPTKKKKKKLDDQSEDE) are disordered. A phosphoserine mark is found at S159, S181, S339, and S351. Residues 189–661 (MTPTYDAHDG…GYIFLSTRAK (473 aa)) enclose the FERM domain. A PH domain is found at 380-476 (KVFKPKKLTL…WMAACRLASK (97 aa)). Residue K383 participates in a 1,2-diacyl-sn-glycero-3-phospho-(1D-myo-inositol-3,4,5-trisphosphate) binding. A Phosphoserine modification is found at S666.

The protein belongs to the kindlin family. In terms of assembly, interacts with ITGB1; the interaction is inhibited in presence of ITGB1BP1. Interacts with FBLIM1. Interacts with active, unphosphorylated CTNNB1. Identified in a complex with CTNNB1 and TCF7L2/TCF4. Interacts with ILK, ITGB1 and ITGB3. As to expression, detected in adult heart muscle (at protein level). Detected in heart, skeletal muscle and testis.

It is found in the cytoplasm. The protein resides in the cell cortex. It localises to the cytoskeleton. The protein localises to the stress fiber. Its subcellular location is the cell junction. It is found in the focal adhesion. The protein resides in the membrane. It localises to the cell projection. The protein localises to the lamellipodium membrane. Its subcellular location is the nucleus. It is found in the myofibril. The protein resides in the sarcomere. It localises to the i band. The protein localises to the cell surface. Scaffolding protein that enhances integrin activation mediated by TLN1 and/or TLN2, but activates integrins only weakly by itself. Binds to membranes enriched in phosphoinositides. Enhances integrin-mediated cell adhesion onto the extracellular matrix and cell spreading; this requires both its ability to interact with integrins and with phospholipid membranes. Required for the assembly of focal adhesions. Participates in the connection between extracellular matrix adhesion sites and the actin cytoskeleton and also in the orchestration of actin assembly and cell shape modulation. Recruits FBLIM1 to focal adhesions. Plays a role in the TGFB1 and integrin signaling pathways. Stabilizes active CTNNB1 and plays a role in the regulation of transcription mediated by CTNNB1 and TCF7L2/TCF4 and in Wnt signaling. This Mus musculus (Mouse) protein is Fermitin family homolog 2 (Fermt2).